The following is a 402-amino-acid chain: MFQQLSASIRHNAHIIFLCISWYFISSLASQVTKQVLTVCPLPLFLGEFQFIYTAVLAWFTCYIAYSFPGFYRIFPNGTFPEYYIDDRETSRAARKESKLSSLIIPPSKPILQTVLPLGLFQFVGKYFGHTATSLVPVSTVASIKTLSPMFILLLQKILKISTLKITLTLIFSLCTLVLGVWIIVQEDNRSPASSNELREFSKYGVICAMISMFIFVLQNIYGKTVFTYRSQTDESQSNSGFSRQESPLPLYEKLDEKLVAKKKPKSYDKLTLMIYISLVGFCLSFGWFITLEFPVLFRYFFQINSSSTVIKAFPVSLFLLNGTFHFIQAMITFHLLGEVSTLTYSIANLMKRFAIIAVSWVFIGRRITWLQVFGLVLNTLGLFLYERCTSQSKIKAKIRPE.

The Cytoplasmic segment spans residues 1–12 (MFQQLSASIRHN). A helical membrane pass occupies residues 13–33 (AHIIFLCISWYFISSLASQVT). Over 34-50 (KQVLTVCPLPLFLGEFQ) the chain is Extracellular. The chain crosses the membrane as a helical span at residues 51-71 (FIYTAVLAWFTCYIAYSFPGF). The Cytoplasmic segment spans residues 72 to 103 (YRIFPNGTFPEYYIDDRETSRAARKESKLSSL). Residues 104–124 (IIPPSKPILQTVLPLGLFQFV) form a helical membrane-spanning segment. At 125–134 (GKYFGHTATS) the chain is on the extracellular side. A helical transmembrane segment spans residues 135 to 155 (LVPVSTVASIKTLSPMFILLL). The Cytoplasmic segment spans residues 156–165 (QKILKISTLK). A helical membrane pass occupies residues 166 to 186 (ITLTLIFSLCTLVLGVWIIVQ). Over 187–206 (EDNRSPASSNELREFSKYGV) the chain is Extracellular. A helical membrane pass occupies residues 207-227 (ICAMISMFIFVLQNIYGKTVF). Residues 228–271 (TYRSQTDESQSNSGFSRQESPLPLYEKLDEKLVAKKKPKSYDKL) are Cytoplasmic-facing. A helical membrane pass occupies residues 272-292 (TLMIYISLVGFCLSFGWFITL). The Extracellular segment spans residues 293-353 (EFPVLFRYFF…TYSIANLMKR (61 aa)). Residues 354-374 (FAIIAVSWVFIGRRITWLQVF) form a helical membrane-spanning segment. Residues 375–402 (GLVLNTLGLFLYERCTSQSKIKAKIRPE) lie on the Cytoplasmic side of the membrane.

Belongs to the TPT transporter family.

It is found in the membrane. This is an uncharacterized protein from Saccharomyces cerevisiae (strain ATCC 204508 / S288c) (Baker's yeast).